We begin with the raw amino-acid sequence, 644 residues long: Uromodulin (644 aa).

The signal sequence occupies residues 1 to 26 (MGQLLSLTWLLLVMVVTPWFTVAGAN). One can recognise an EGF-like 1 domain in the interval 30–66 (EARRCSECHDNATCVLDGVVTTCSCQAGFTGDGLVCE). 21 disulfide bridges follow: C34/C43, C37/C52, C54/C65, C71/C84, C79/C93, C95/C107, C113/C127, C121/C136, C138/C149, C151/C162, C156/C173, C177/C270, C198/C285, C220/C258, C226/C290, C251/C259, C300/C309, C303/C318, C320/C350, C338/C428, and C369/C392. N40 is a glycosylation site (N-linked (GlcNAc...) asparagine). One can recognise an EGF-like 2; calcium-binding domain in the interval 67–108 (DIDECATPWTHNCSNSICMNTLGSYECSCQDGFRLTPGLGCI). N-linked (GlcNAc...) asparagine glycosylation occurs at N78. The region spanning 109–150 (DVNECTEQGLSNCHSLATCVNTEGSYSCVCPKGYRGDGWYCE) is the EGF-like 3; calcium-binding domain. The tract at residues 151–174 (CSPGFCEPGLDCLPQGPSGKLVCQ) is beta hairpin. The interval 175–294 (DPCNVYETLT…CNLAYCTDPS (120 aa)) is D10C. A glycan (N-linked (GlcNAc...) asparagine) is linked at N235. N278 carries an N-linked (GlcNAc...) asparagine glycan. An EGF-like 4 domain is found at 295–326 (SVEGTCEECGVDEDCVSDNGRWRCQCKQDFNV). The N-linked (GlcNAc...) asparagine glycan is linked to N325. The interval 337–432 (ECEANEIKIS…RINFECSYPL (96 aa)) is ZP-N. In terms of domain architecture, ZP spans 337–592 (ECEANEIKIS…PTCSGTRYRS (256 aa)). Residues N399 and N450 are each glycosylated (N-linked (GlcNAc...) asparagine). A flexible ZP-N/ZP-C linker; important for secretion and polymerization into filaments region spans residues 433–456 (DMKVSLKTSLQPMVSALNISLGGT). Residues 457–467 (GKFTVQMALFQ) are internal hydrophobic patch (IHP). Residues 457–592 (GKFTVQMALF…PTCSGTRYRS (136 aa)) are ZP-C. Intrachain disulfides connect C509-C569, C530-C585, and C574-C581. N516 carries an N-linked (GlcNAc...) asparagine glycan. An essential for cleavage by HPN region spans residues 589 to 592 (RYRS). The tract at residues 601 to 609 (VLNLGPITR) is external hydrophobic patch (EHP); regulates polymerization into filaments. A lipid anchor (GPI-anchor amidated serine) is attached at S615. The propeptide at 616–644 (VSKAASSNLGFLSIWLLLFLSATLTLMVH) is removed in mature form.

In terms of assembly, homodimer that then polymerizes into long filaments. The filaments can additionally assemble laterally to form a sheet. The filaments consist of a zigzag-shaped backbone with laterally protruding arms which interact with bacterial adhesin fimH. Two fimH molecules can bind to a single UMOD monomer. Post-translationally, N-glycosylated. In terms of processing, proteolytically cleaved at a conserved C-terminal proteolytic cleavage site to generate the secreted form found in urine. This cleavage is catalyzed by HPN. As to expression, expression restricted to the thick ascending limb of the loop of Henle (TALH).

It is found in the apical cell membrane. Its subcellular location is the basolateral cell membrane. It localises to the cell projection. The protein localises to the cilium membrane. The protein resides in the secreted. In terms of biological role, functions in biogenesis and organization of the apical membrane of epithelial cells of the thick ascending limb of Henle's loop (TALH), where it promotes formation of complex filamentous gel-like structure that may play a role in the water barrier permeability. May serve as a receptor for binding and endocytosis of cytokines (IL-1, IL-2) and TNF. Facilitates neutrophil migration across renal epithelia. Functionally, in the urine, may contribute to colloid osmotic pressure, retards passage of positively charged electrolytes, and inhibits formation of liquid containing supersaturated salts and subsequent formation of salt crystals. Protects against urinary tract infections by binding to type 1 fimbriated E.coli. Binds to bacterial adhesin fimH which mediates the stable formation of bacterial aggregates, prevents the binding of E.coli to uroplakins UPK1A and UPK1B which act as urothelial receptors for type I fimbriae, and allows for pathogen clearance through micturation. Also promotes aggregation of other bacteria including K.pneumoniae, P.aeruginosa and S.mitis and so may also protect against other uropathogens. This chain is Uromodulin (Umod), found in Rattus norvegicus (Rat).